Here is a 533-residue protein sequence, read N- to C-terminus: MEIAREKSGAKSECIDSGEETLRESIVIFDFGSQYSLLIARRIREMHVYCELVSHDTPWEKIAHLNPRGFILSGGPSSVYEPEAPLAPAYIFESKLPVLGICYGMQAITQQLGGVVEHSDKREYGHALLHSNVINTELLADMPEPSPVWMSHGDRIEKLPAGFKSLAYTENCPVAVMGNESDIYGLQFHPEVVHSPHGKIILKNFVFNICKCHANWTMGNYIQESIQNIREQVGDGQVICALSGGVDSAVVASLIHKAIGDQLTCIYVNNGLLRREEADRTLHVFKNHMGMKIIYVDAIDRFLESLGGITDPEQKRKVIGSEFIKVFEDEACKLGQIDFLAQGTLYPDVIESVSSVSKASAKIKSHHNVGGLPAHMKLKLIEPLRYLFKDEVRLLGKELGLPDEMIWRQPFPGPGLAIRIIGEVTREKLEILRSADWIVMSEIKKAKMYHQVWQSFAILTDVKSVGVMGDFRTYGYLVAIRAVTSEDAMTADWAKLPYDLLSIISNRIVNEVKEVNRVVYDISSKPPSTIEWE.

In terms of domain architecture, Glutamine amidotransferase type-1 spans 25–215; it reads SIVIFDFGSQ…VFNICKCHAN (191 aa). Cys-102 functions as the Nucleophile in the catalytic mechanism. Residues His-189 and Glu-191 contribute to the active site. One can recognise a GMPS ATP-PPase domain in the interval 216–408; that stretch reads WTMGNYIQES…LGLPDEMIWR (193 aa). 243–249 is a binding site for ATP; it reads SGGVDSA.

Homodimer.

The enzyme catalyses XMP + L-glutamine + ATP + H2O = GMP + L-glutamate + AMP + diphosphate + 2 H(+). The protein operates within purine metabolism; GMP biosynthesis; GMP from XMP (L-Gln route): step 1/1. Its function is as follows. Catalyzes the synthesis of GMP from XMP. The sequence is that of GMP synthase [glutamine-hydrolyzing] from Dehalococcoides mccartyi (strain CBDB1).